Reading from the N-terminus, the 493-residue chain is Glutamyl-tRNA(Gln) amidotransferase subunit A (493 aa).

Active-site charge relay system residues include K78 and S158. The Acyl-ester intermediate role is filled by S182.

Belongs to the amidase family. GatA subfamily. As to quaternary structure, heterotrimer of A, B and C subunits.

The catalysed reaction is L-glutamyl-tRNA(Gln) + L-glutamine + ATP + H2O = L-glutaminyl-tRNA(Gln) + L-glutamate + ADP + phosphate + H(+). In terms of biological role, allows the formation of correctly charged Gln-tRNA(Gln) through the transamidation of misacylated Glu-tRNA(Gln) in organisms which lack glutaminyl-tRNA synthetase. The reaction takes place in the presence of glutamine and ATP through an activated gamma-phospho-Glu-tRNA(Gln). This is Glutamyl-tRNA(Gln) amidotransferase subunit A from Rickettsia conorii (strain ATCC VR-613 / Malish 7).